We begin with the raw amino-acid sequence, 264 residues long: Indole-3-glycerol phosphate synthase (264 aa).

The protein belongs to the TrpC family.

The enzyme catalyses 1-(2-carboxyphenylamino)-1-deoxy-D-ribulose 5-phosphate + H(+) = (1S,2R)-1-C-(indol-3-yl)glycerol 3-phosphate + CO2 + H2O. The protein operates within amino-acid biosynthesis; L-tryptophan biosynthesis; L-tryptophan from chorismate: step 4/5. This Albidiferax ferrireducens (strain ATCC BAA-621 / DSM 15236 / T118) (Rhodoferax ferrireducens) protein is Indole-3-glycerol phosphate synthase.